The following is a 332-amino-acid chain: Terpene synthase 1 (332 aa).

The DDxx(x)D/E motif motif lies at 81-86; the sequence is DDGLDA. Residues 221-229 carry the NDxxSxxxD/E motif motif; the sequence is NDLVSYEKE.

Belongs to the terpene synthase family.

It catalyses the reaction (2E,6E)-farnesyl diphosphate = (2S,3R,6S,9S)-(-)-protoillud-7-ene + diphosphate. In terms of biological role, terpene synthase that converts its substrate farnesyl diphosphate (FPP) into the sesquiterpene protoillud-7-ene. The sequence is that of Terpene synthase 1 from Acytostelium subglobosum (Slime mold).